The chain runs to 113 residues: Dolichyl-diphosphooligosaccharide--protein glycosyltransferase subunit DAD1 (113 aa).

The residue at position 2 (serine 2) is an N-acetylserine. The Cytoplasmic segment spans residues serine 2 to tyrosine 30. A helical transmembrane segment spans residues leucine 31 to phenylalanine 51. Position 52 (proline 52) is a topological domain, lumenal. A helical transmembrane segment spans residues phenylalanine 53–leucine 73. Over arginine 74–arginine 92 the chain is Cytoplasmic. The chain crosses the membrane as a helical span at residues alanine 93–glycine 113.

The protein belongs to the DAD/OST2 family. Component of the oligosaccharyltransferase (OST) complex. OST exists in two different complex forms which contain common core subunits RPN1, RPN2, OST48, OST4, DAD1 and TMEM258, either STT3A or STT3B as catalytic subunits, and form-specific accessory subunits. STT3A complex assembly occurs through the formation of 3 subcomplexes. Subcomplex 1 contains RPN1 and TMEM258, subcomplex 2 contains the STT3A-specific subunits STT3A, DC2/OSTC, and KCP2 as well as the core subunit OST4, and subcomplex 3 contains RPN2, DAD1, and OST48. The STT3A complex can form stable complexes with the Sec61 complex or with both the Sec61 and TRAP complexes.

It localises to the endoplasmic reticulum membrane. Its pathway is protein modification; protein glycosylation. Functionally, subunit of the oligosaccharyl transferase (OST) complex that catalyzes the initial transfer of a defined glycan (Glc(3)Man(9)GlcNAc(2) in eukaryotes) from the lipid carrier dolichol-pyrophosphate to an asparagine residue within an Asn-X-Ser/Thr consensus motif in nascent polypeptide chains, the first step in protein N-glycosylation. N-glycosylation occurs cotranslationally and the complex associates with the Sec61 complex at the channel-forming translocon complex that mediates protein translocation across the endoplasmic reticulum (ER). All subunits are required for a maximal enzyme activity. The chain is Dolichyl-diphosphooligosaccharide--protein glycosyltransferase subunit DAD1 from Pongo abelii (Sumatran orangutan).